Reading from the N-terminus, the 228-residue chain is Cytidylate kinase (228 aa).

17–25 (GPSASGKGT) provides a ligand contact to ATP.

Belongs to the cytidylate kinase family. Type 1 subfamily.

It localises to the cytoplasm. The catalysed reaction is CMP + ATP = CDP + ADP. The enzyme catalyses dCMP + ATP = dCDP + ADP. The sequence is that of Cytidylate kinase from Paraburkholderia xenovorans (strain LB400).